Reading from the N-terminus, the 563-residue chain is Arginine--tRNA ligase (563 aa).

The 'HIGH' region motif lies at P108 to H118.

It belongs to the class-I aminoacyl-tRNA synthetase family. Monomer.

Its subcellular location is the cytoplasm. It carries out the reaction tRNA(Arg) + L-arginine + ATP = L-arginyl-tRNA(Arg) + AMP + diphosphate. In Pasteurella multocida (strain Pm70), this protein is Arginine--tRNA ligase (argS).